Here is a 410-residue protein sequence, read N- to C-terminus: 2,3-bisphosphoglycerate-independent phosphoglycerate mutase (410 aa).

This sequence belongs to the BPG-independent phosphoglycerate mutase family. A-PGAM subfamily.

The enzyme catalyses (2R)-2-phosphoglycerate = (2R)-3-phosphoglycerate. Its pathway is carbohydrate degradation; glycolysis; pyruvate from D-glyceraldehyde 3-phosphate: step 3/5. In terms of biological role, catalyzes the interconversion of 2-phosphoglycerate and 3-phosphoglycerate. The protein is 2,3-bisphosphoglycerate-independent phosphoglycerate mutase of Pyrococcus abyssi (strain GE5 / Orsay).